The sequence spans 207 residues: LexA repressor (207 aa).

Positions 28–48 form a DNA-binding region, H-T-H motif; it reads VREIAVAVGLASSSTVHGHLE. Catalysis depends on for autocatalytic cleavage activity residues Ser-129 and Lys-167.

Belongs to the peptidase S24 family. In terms of assembly, homodimer.

It catalyses the reaction Hydrolysis of Ala-|-Gly bond in repressor LexA.. In terms of biological role, represses a number of genes involved in the response to DNA damage (SOS response), including recA and lexA. In the presence of single-stranded DNA, RecA interacts with LexA causing an autocatalytic cleavage which disrupts the DNA-binding part of LexA, leading to derepression of the SOS regulon and eventually DNA repair. The chain is LexA repressor from Oceanobacillus iheyensis (strain DSM 14371 / CIP 107618 / JCM 11309 / KCTC 3954 / HTE831).